We begin with the raw amino-acid sequence, 195 residues long: Holliday junction branch migration complex subunit RuvA (195 aa).

A domain I region spans residues 1–64; it reads MIGRIAGLLL…EDAHLLFGFM (64 aa). The domain II stretch occupies residues 65-140; the sequence is TEPERVLFRQ…KISPAITLPE (76 aa). The tract at residues 140-144 is flexible linker; sequence ETGTA. Positions 145-195 are domain III; the sequence is MASSTDKDILNALSALGYNDREANWAVGQLSEGVTVSDGIMQSLRLLSKAK.

The protein belongs to the RuvA family. As to quaternary structure, homotetramer. Forms an RuvA(8)-RuvB(12)-Holliday junction (HJ) complex. HJ DNA is sandwiched between 2 RuvA tetramers; dsDNA enters through RuvA and exits via RuvB. An RuvB hexamer assembles on each DNA strand where it exits the tetramer. Each RuvB hexamer is contacted by two RuvA subunits (via domain III) on 2 adjacent RuvB subunits; this complex drives branch migration. In the full resolvosome a probable DNA-RuvA(4)-RuvB(12)-RuvC(2) complex forms which resolves the HJ.

The protein localises to the cytoplasm. Functionally, the RuvA-RuvB-RuvC complex processes Holliday junction (HJ) DNA during genetic recombination and DNA repair, while the RuvA-RuvB complex plays an important role in the rescue of blocked DNA replication forks via replication fork reversal (RFR). RuvA specifically binds to HJ cruciform DNA, conferring on it an open structure. The RuvB hexamer acts as an ATP-dependent pump, pulling dsDNA into and through the RuvAB complex. HJ branch migration allows RuvC to scan DNA until it finds its consensus sequence, where it cleaves and resolves the cruciform DNA. This Nitrosomonas europaea (strain ATCC 19718 / CIP 103999 / KCTC 2705 / NBRC 14298) protein is Holliday junction branch migration complex subunit RuvA.